The following is a 233-amino-acid chain: Thrombin-like enzyme elegaxobin-2 (233 aa).

A Peptidase S1 domain is found at 1 to 224; the sequence is VIGGDECNIN…HLDWIKGIIA (224 aa). Disulfide bonds link C7-C138, C25-C41, C73-C231, C117-C185, C149-C164, and C175-C200. H40 acts as the Charge relay system in catalysis. N78 carries N-linked (GlcNAc...) asparagine glycosylation. D85 (charge relay system) is an active-site residue. S179 functions as the Charge relay system in the catalytic mechanism.

It belongs to the peptidase S1 family. Snake venom subfamily. In terms of assembly, monomer. As to expression, expressed by the venom gland.

The protein localises to the secreted. Thrombin-like snake venom serine protease that clots rabbit fibrinogen. Only the beta chain of fibrinogen (FGB) is cleaved, releasing fibrinopeptide B. Human and bovine fibrinogen are unaffected. Also cleaves Met-Lys and Arg-Ser bonds in heat-denatured bovine plasma kininogen to release Lys-bradykinin. The sequence is that of Thrombin-like enzyme elegaxobin-2 from Protobothrops elegans (Elegant pitviper).